Here is a 173-residue protein sequence, read N- to C-terminus: Peptide methionine sulfoxide reductase MsrA (173 aa).

C10 is an active-site residue.

It belongs to the MsrA Met sulfoxide reductase family.

It carries out the reaction L-methionyl-[protein] + [thioredoxin]-disulfide + H2O = L-methionyl-(S)-S-oxide-[protein] + [thioredoxin]-dithiol. It catalyses the reaction [thioredoxin]-disulfide + L-methionine + H2O = L-methionine (S)-S-oxide + [thioredoxin]-dithiol. Has an important function as a repair enzyme for proteins that have been inactivated by oxidation. Catalyzes the reversible oxidation-reduction of methionine sulfoxide in proteins to methionine. The protein is Peptide methionine sulfoxide reductase MsrA of Psychrobacter cryohalolentis (strain ATCC BAA-1226 / DSM 17306 / VKM B-2378 / K5).